The chain runs to 737 residues: Angiotensin-converting enzyme-like protein Ace3 (737 aa).

The signal sequence occupies residues 1–23; that stretch reads MNLPWALLLVLLSHRQLLPWLRT. The Extracellular segment spans residues 24–639; that stretch reads VGETSLNDFY…TDTEPEQAYL (616 aa). The Peptidase M2 domain maps to 32-611; the sequence is FYSEAQAKLF…VKQGDTLGWP (580 aa). Cysteine 146 and cysteine 152 are disulfide-bonded. Chloride-binding residues include arginine 180 and tyrosine 218. Cysteine 346 and cysteine 364 form a disulfide bridge. Positions 377 and 381 each coordinate Zn(2+). N-linked (GlcNAc...) asparagine glycosylation occurs at asparagine 390. Glutamate 405 contributes to the Zn(2+) binding site. Chloride is bound by residues tryptophan 479, arginine 483, and arginine 516. Cysteine 532 and cysteine 544 are joined by a disulfide. Residues 640 to 660 traverse the membrane as a helical segment; it reads GQWVLLSMSFFMLVLILALGF. Residues 661–700 lie on the Cytoplasmic side of the membrane; sequence RLHYLEKQLLDEDTMILKTLPYSYFLGIAMEPHQAARKQW. The chain crosses the membrane as a helical span at residues 701–721; sequence LLLGLCCILMLCCIGLLIRIV. Over 722 to 737 the chain is Extracellular; sequence TQNTENTPWMKNEGQS.

This sequence belongs to the peptidase M2 family. Interacts with IZUMO1. Zn(2+) serves as cofactor. As to expression, expressed in sperm and testis (at protein level). Expressed in heart and testis. Not detected in kidney, lung, liver, brain, ovary, spleen and thymus.

The protein localises to the cytoplasmic vesicle. It localises to the secretory vesicle. The protein resides in the acrosome membrane. The polypeptide is Angiotensin-converting enzyme-like protein Ace3 (Mus musculus (Mouse)).